Consider the following 199-residue polypeptide: UPF0316 protein LA_0606 (199 aa).

2 helical membrane passes run 47–67 (IAASLGFLEVLLWVVVITQVI) and 73–93 (VFCYLAYAGGFATGTFIGMIL).

The protein belongs to the UPF0316 family.

It is found in the cell membrane. The sequence is that of UPF0316 protein LA_0606 from Leptospira interrogans serogroup Icterohaemorrhagiae serovar Lai (strain 56601).